Reading from the N-terminus, the 241-residue chain is MVTHTKPIYRRIVLKMSGEALQGAEGFGIDTTILNRMVTEVKELVKIGIQIGIVMGGGNLFRGAELVKSGMNRIVGDHIGMLATIMNGLAMRSALNHAYVHSHLMSAIPLNGVCDHYNWMKAINLLSNNWVVIFAAGTGNPLFTTDSAACLRGIEIKADVVLKATKVDGVFSTDPIQHPDATLYEQLSYQDVLERELKVMDLTAFTLAREHNLPIRIFNINKLGALKRIIMGYKEGTLITK.

15–18 contacts ATP; it reads KMSG. The interval 23–28 is involved in allosteric activation by GTP; sequence GAEGFG. Gly-57 is a UMP binding site. The ATP site is built by Gly-58 and Arg-62. Residues Asp-77 and 138–145 each bind UMP; that span reads TGNPLFTT. Residues Thr-165, Phe-171, and Asp-174 each contribute to the ATP site.

Belongs to the UMP kinase family. In terms of assembly, homohexamer.

It localises to the cytoplasm. It catalyses the reaction UMP + ATP = UDP + ADP. It participates in pyrimidine metabolism; CTP biosynthesis via de novo pathway; UDP from UMP (UMPK route): step 1/1. Its activity is regulated as follows. Allosterically activated by GTP. Inhibited by UTP. Catalyzes the reversible phosphorylation of UMP to UDP. The protein is Uridylate kinase of Blochmanniella pennsylvanica (strain BPEN).